Here is a 157-residue protein sequence, read N- to C-terminus: Transcriptional repressor NrdR (157 aa).

A disordered region spans residues 1–21 (MKCPNCHKNGSRVVDSRPADN). Residues 3 to 34 (CPNCHKNGSRVVDSRPADNGHAIRRRRECEQC) fold into a zinc finger. The region spanning 49 to 139 (LLVIKKNGTR…VYREFKDMHA (91 aa)) is the ATP-cone domain.

This sequence belongs to the NrdR family. The cofactor is Zn(2+).

Negatively regulates transcription of bacterial ribonucleotide reductase nrd genes and operons by binding to NrdR-boxes. The polypeptide is Transcriptional repressor NrdR (Ligilactobacillus salivarius (strain UCC118) (Lactobacillus salivarius)).